The chain runs to 236 residues: Small ribosomal subunit protein uS2c (236 aa).

The protein belongs to the universal ribosomal protein uS2 family.

The protein localises to the plastid. Its subcellular location is the chloroplast. This Chloranthus spicatus (Chulantree) protein is Small ribosomal subunit protein uS2c (rps2).